The chain runs to 630 residues: Adenine DNA glycosylase (630 aa).

The segment covering 54–72 has biased composition (basic and acidic residues); sequence MRKCREKKEAEREAEREAE. Residues 54–123 form a disordered region; it reads MRKCREKKEA…ALGGDIEDLF (70 aa). Over residues 73–123 the composition is skewed to acidic residues; sequence REAEEEEKAEEAEAEADKEEAEEESEEEEEEEEEEAEAEEEALGGDIEDLF. The active-site Proton donor/acceptor is Glu-168. Residues Cys-341, Cys-348, Cys-351, and Cys-357 each coordinate [4Fe-4S] cluster. A Nudix hydrolase domain is found at 383–536; that stretch reads PRHDFCCVCV…RKVPPFRLQH (154 aa). A Nudix box motif is present at residues 427-451; sequence VILNEEADSATRRNAINVYLKEAFR.

Belongs to the Nth/MutY family. It depends on [4Fe-4S] cluster as a cofactor.

The protein resides in the nucleus. The catalysed reaction is Hydrolyzes free adenine bases from 7,8-dihydro-8-oxoguanine:adenine mismatched double-stranded DNA, leaving an apurinic site.. In terms of biological role, involved in oxidative DNA damage repair. Initiates repair of A*oxoG to C*G by removing the inappropriately paired adenine base from the DNA backbone. Possesses both adenine and 2-OH-A DNA glycosylase activities. The protein is Adenine DNA glycosylase (MYH) of Arabidopsis thaliana (Mouse-ear cress).